The chain runs to 185 residues: Ribosome-recycling factor (185 aa).

It belongs to the RRF family.

The protein resides in the cytoplasm. Functionally, responsible for the release of ribosomes from messenger RNA at the termination of protein biosynthesis. May increase the efficiency of translation by recycling ribosomes from one round of translation to another. The protein is Ribosome-recycling factor of Dehalococcoides mccartyi (strain CBDB1).